We begin with the raw amino-acid sequence, 183 residues long: SAGA-associated factor 11 homolog (183 aa).

The SGF11-type zinc finger occupies 98 to 119 (CSCPNCNRIVAASRFAPHLEKC). A disordered region spans residues 140–167 (GGNYFGADEDDEDDADWSGEKRKKKIAP). The span at 146–156 (ADEDDEDDADW) shows a compositional bias: acidic residues.

It belongs to the SGF11 family. As to quaternary structure, component of some SAGA transcription coactivator-HAT complexes. Within the SAGA complex, participates in a subcomplex of SAGA called the DUB module (deubiquitination module).

The protein localises to the nucleus. Its function is as follows. Component of the transcription regulatory histone acetylation (HAT) complex SAGA, a multiprotein complex that activates transcription by remodeling chromatin and mediating histone acetylation and deubiquitination. Within the SAGA complex, participates in a subcomplex that specifically deubiquitinates histone H2B. The SAGA complex is recruited to specific gene promoters by activators, where it is required for transcription. The sequence is that of SAGA-associated factor 11 homolog from Culex quinquefasciatus (Southern house mosquito).